The chain runs to 68 residues: Small ribosomal subunit protein bS18c (68 aa).

It belongs to the bacterial ribosomal protein bS18 family. As to quaternary structure, part of the 30S ribosomal subunit.

The protein resides in the plastid. Its subcellular location is the chloroplast. This is Small ribosomal subunit protein bS18c (rps18) from Cyanidium caldarium (Red alga).